A 571-amino-acid chain; its full sequence is Dihydroxy-acid dehydratase (571 aa).

[2Fe-2S] cluster is bound at residue cysteine 56. Position 88 (aspartate 88) interacts with Mg(2+). Cysteine 129 is a binding site for [2Fe-2S] cluster. Positions 130 and 131 each coordinate Mg(2+). Lysine 131 is subject to N6-carboxylysine. Cysteine 201 serves as a coordination point for [2Fe-2S] cluster. Glutamate 452 contributes to the Mg(2+) binding site. Serine 478 acts as the Proton acceptor in catalysis.

This sequence belongs to the IlvD/Edd family. As to quaternary structure, homodimer. The cofactor is [2Fe-2S] cluster. Requires Mg(2+) as cofactor.

The catalysed reaction is (2R)-2,3-dihydroxy-3-methylbutanoate = 3-methyl-2-oxobutanoate + H2O. It carries out the reaction (2R,3R)-2,3-dihydroxy-3-methylpentanoate = (S)-3-methyl-2-oxopentanoate + H2O. Its pathway is amino-acid biosynthesis; L-isoleucine biosynthesis; L-isoleucine from 2-oxobutanoate: step 3/4. It participates in amino-acid biosynthesis; L-valine biosynthesis; L-valine from pyruvate: step 3/4. Functionally, functions in the biosynthesis of branched-chain amino acids. Catalyzes the dehydration of (2R,3R)-2,3-dihydroxy-3-methylpentanoate (2,3-dihydroxy-3-methylvalerate) into 2-oxo-3-methylpentanoate (2-oxo-3-methylvalerate) and of (2R)-2,3-dihydroxy-3-methylbutanoate (2,3-dihydroxyisovalerate) into 2-oxo-3-methylbutanoate (2-oxoisovalerate), the penultimate precursor to L-isoleucine and L-valine, respectively. The protein is Dihydroxy-acid dehydratase of Streptococcus suis (strain 98HAH33).